The chain runs to 326 residues: uncharacterized protein (326 aa).

This sequence belongs to the transferase hexapeptide repeat family.

This is an uncharacterized protein from Escherichia coli (strain K12).